The following is a 675-amino-acid chain: tRNA 5-methylaminomethyl-2-thiouridine biosynthesis bifunctional protein MnmC (675 aa).

The tract at residues 1-245 (MANLPIQHAS…KREMLSGLLP (245 aa)) is tRNA (mnm(5)s(2)U34)-methyltransferase. The tract at residues 271–675 (IGGGIASVLT…LLKGKPVTHD (405 aa)) is FAD-dependent cmnm(5)s(2)U34 oxidoreductase.

It in the N-terminal section; belongs to the methyltransferase superfamily. tRNA (mnm(5)s(2)U34)-methyltransferase family. This sequence in the C-terminal section; belongs to the DAO family. Requires FAD as cofactor.

It localises to the cytoplasm. The enzyme catalyses 5-aminomethyl-2-thiouridine(34) in tRNA + S-adenosyl-L-methionine = 5-methylaminomethyl-2-thiouridine(34) in tRNA + S-adenosyl-L-homocysteine + H(+). Its function is as follows. Catalyzes the last two steps in the biosynthesis of 5-methylaminomethyl-2-thiouridine (mnm(5)s(2)U) at the wobble position (U34) in tRNA. Catalyzes the FAD-dependent demodification of cmnm(5)s(2)U34 to nm(5)s(2)U34, followed by the transfer of a methyl group from S-adenosyl-L-methionine to nm(5)s(2)U34, to form mnm(5)s(2)U34. In Pectobacterium atrosepticum (strain SCRI 1043 / ATCC BAA-672) (Erwinia carotovora subsp. atroseptica), this protein is tRNA 5-methylaminomethyl-2-thiouridine biosynthesis bifunctional protein MnmC.